Reading from the N-terminus, the 1093-residue chain is TATA element modulatory factor (1093 aa).

Disordered stretches follow at residues 38–80 (WAET…SPKA) and 108–189 (TIQK…DMKV). Residues 51-70 (SPVSGGWDTSTWGLKSNTEP) are compositionally biased toward polar residues. Residues S72, S77, S112, and S136 each carry the phosphoserine modification. Over residues 123–137 (QRPEEEVKSSLHESL) the composition is skewed to basic and acidic residues. The segment covering 139–158 (IGQSRTPETTESQVKDSSLC) has biased composition (polar residues). The segment covering 173–187 (TEGKHEETVNKESDM) has biased composition (basic and acidic residues). Residues S199 and S217 each carry the phosphoserine modification. Over residues 229 to 238 (PKEQKHEDRQ) the composition is skewed to basic and acidic residues. Disordered regions lie at residues 229 to 260 (PKEQ…SDIE) and 266 to 285 (SVIS…SKSS). The span at 246-257 (VSTFSSGTSTTS) shows a compositional bias: low complexity. A phosphoserine mark is found at S328, S330, S333, S338, S344, S413, S542, S925, and S928. Residues 333-342 (SLDSRSVSEI) are interaction with Elongin BC complex. Residues 439 to 922 (EALSEKEDVC…QETIKEKERK (484 aa)) adopt a coiled-coil conformation. The tract at residues 919–939 (KERKPFSVSSTPTMSRSSSIS) is disordered. Over residues 925–939 (SVSSTPTMSRSSSIS) the composition is skewed to low complexity. T929 carries the phosphothreonine modification. Phosphoserine is present on S933. Positions 984–1092 (SIIENLQSQL…QIDELLRQSL (109 aa)) form a coiled coil.

In terms of assembly, interacts with TRNP1; may regulate TRNP1 proteasomal degradation. Component of the SNF/SWI transcription factor complexes. Interacts with RAB6A. Interacts with STAT3 and FER. Interacts with TCEB1. Post-translationally, phosphorylated by FER.

It is found in the cytoplasm. Its subcellular location is the nucleus. The protein localises to the golgi apparatus membrane. Its function is as follows. Potential coactivator of the androgen receptor. Mediates STAT3 degradation. May play critical roles in two RAB6-dependent retrograde transport processes: one from endosomes to the Golgi and the other from the Golgi to the ER. This protein binds the HIV-1 TATA element and inhibits transcriptional activation by the TATA-binding protein (TBP). The protein is TATA element modulatory factor (TMF1) of Homo sapiens (Human).